We begin with the raw amino-acid sequence, 573 residues long: Sulfite reductase [NADPH] hemoprotein beta-component (573 aa).

[4Fe-4S] cluster contacts are provided by Cys438, Cys444, Cys483, and Cys487. Cys487 serves as a coordination point for siroheme.

The protein belongs to the nitrite and sulfite reductase 4Fe-4S domain family. Alpha(8)-beta(8). The alpha component is a flavoprotein, the beta component is a hemoprotein. The cofactor is siroheme. It depends on [4Fe-4S] cluster as a cofactor.

It catalyses the reaction hydrogen sulfide + 3 NADP(+) + 3 H2O = sulfite + 3 NADPH + 4 H(+). It functions in the pathway sulfur metabolism; hydrogen sulfide biosynthesis; hydrogen sulfide from sulfite (NADPH route): step 1/1. In terms of biological role, component of the sulfite reductase complex that catalyzes the 6-electron reduction of sulfite to sulfide. This is one of several activities required for the biosynthesis of L-cysteine from sulfate. The protein is Sulfite reductase [NADPH] hemoprotein beta-component of Nitrosomonas europaea (strain ATCC 19718 / CIP 103999 / KCTC 2705 / NBRC 14298).